The sequence spans 239 residues: Small ribosomal subunit protein uS3 (239 aa).

The region spanning 39–107 (VRQVLRKKMS…SVHINVIEVR (69 aa)) is the KH type-2 domain. The tract at residues 217 to 239 (KQDDISRGDRNADRSSRRSREVR) is disordered.

This sequence belongs to the universal ribosomal protein uS3 family. Part of the 30S ribosomal subunit. Forms a tight complex with proteins S10 and S14.

In terms of biological role, binds the lower part of the 30S subunit head. Binds mRNA in the 70S ribosome, positioning it for translation. The sequence is that of Small ribosomal subunit protein uS3 from Xylella fastidiosa (strain 9a5c).